The primary structure comprises 251 residues: Hydroxyacylglutathione hydrolase (251 aa).

7 residues coordinate Zn(2+): H58, H60, D62, H63, H116, D135, and H173.

This sequence belongs to the metallo-beta-lactamase superfamily. Glyoxalase II family. Monomer. Requires Zn(2+) as cofactor.

The catalysed reaction is an S-(2-hydroxyacyl)glutathione + H2O = a 2-hydroxy carboxylate + glutathione + H(+). It participates in secondary metabolite metabolism; methylglyoxal degradation; (R)-lactate from methylglyoxal: step 2/2. Its function is as follows. Thiolesterase that catalyzes the hydrolysis of S-D-lactoyl-glutathione to form glutathione and D-lactic acid. The sequence is that of Hydroxyacylglutathione hydrolase from Bdellovibrio bacteriovorus (strain ATCC 15356 / DSM 50701 / NCIMB 9529 / HD100).